A 255-amino-acid polypeptide reads, in one-letter code: MFKVDLNSDLGESFGAYKMGMDEEILKFVSSVNVACGFHAGDPCVMDKTLNLAKQNGVCIGAHPSYPDLLGFGRRNMQISFEEAKNYALYQLGALFGFAKAKGMKIQHFKAHGALYNMAAIDENLALALCEAVASFDENIIFLGLSNSAMNEAAKKKGLRYANEVFADRAYNDDGTLVSRKLEGALIHDENLAIKRVIKMIKESKVTSINGKEIDLKADSICVHGDNIKALEFVKKIKENLEKEQIQICALENFI.

It belongs to the LamB/PxpA family. In terms of assembly, forms a complex composed of PxpA, PxpB and PxpC.

The catalysed reaction is 5-oxo-L-proline + ATP + 2 H2O = L-glutamate + ADP + phosphate + H(+). Functionally, catalyzes the cleavage of 5-oxoproline to form L-glutamate coupled to the hydrolysis of ATP to ADP and inorganic phosphate. The protein is 5-oxoprolinase subunit A of Campylobacter jejuni subsp. jejuni serotype O:6 (strain 81116 / NCTC 11828).